The sequence spans 388 residues: Ferrochelatase (388 aa).

The Fe cation site is built by histidine 196 and glutamate 277.

Belongs to the ferrochelatase family.

The protein localises to the cytoplasm. It catalyses the reaction heme b + 2 H(+) = protoporphyrin IX + Fe(2+). It functions in the pathway porphyrin-containing compound metabolism; protoheme biosynthesis; protoheme from protoporphyrin-IX: step 1/1. Functionally, catalyzes the ferrous insertion into protoporphyrin IX. The chain is Ferrochelatase from Trichormus variabilis (strain ATCC 29413 / PCC 7937) (Anabaena variabilis).